Consider the following 447-residue polypeptide: Glutamyl-tRNA reductase (447 aa).

Residues 56 to 59, Ser119, 124 to 126, and Gln130 each bind substrate; these read TCNR and ETQ. Residue Cys57 is the Nucleophile of the active site. 201-206 is a binding site for NADP(+); the sequence is GLGEMS.

The protein belongs to the glutamyl-tRNA reductase family. In terms of assembly, homodimer.

The catalysed reaction is (S)-4-amino-5-oxopentanoate + tRNA(Glu) + NADP(+) = L-glutamyl-tRNA(Glu) + NADPH + H(+). The protein operates within porphyrin-containing compound metabolism; protoporphyrin-IX biosynthesis; 5-aminolevulinate from L-glutamyl-tRNA(Glu): step 1/2. In terms of biological role, catalyzes the NADPH-dependent reduction of glutamyl-tRNA(Glu) to glutamate 1-semialdehyde (GSA). This chain is Glutamyl-tRNA reductase, found in Helicobacter acinonychis (strain Sheeba).